A 166-amino-acid polypeptide reads, in one-letter code: Small ribosomal subunit protein uS4 (166 aa).

The S4 RNA-binding domain occupies 103–165; it reads RRLQTVVYKK…PTSPYFKKAQ (63 aa).

It belongs to the universal ribosomal protein uS4 family. In terms of assembly, part of the 30S ribosomal subunit. Contacts protein S5. The interaction surface between S4 and S5 is involved in control of translational fidelity.

Its function is as follows. One of the primary rRNA binding proteins, it binds directly to 16S rRNA where it nucleates assembly of the body of the 30S subunit. In terms of biological role, with S5 and S12 plays an important role in translational accuracy. The polypeptide is Small ribosomal subunit protein uS4 (Ignicoccus hospitalis (strain KIN4/I / DSM 18386 / JCM 14125)).